Reading from the N-terminus, the 138-residue chain is Basic phospholipase A2 myotoxin I (138 aa).

Positions 1–16 (MRTLWIMAVLLVGVEG) are cleaved as a signal peptide. Intrachain disulfides connect Cys42-Cys131, Cys44-Cys60, Cys59-Cys111, Cys65-Cys138, Cys66-Cys104, Cys73-Cys97, and Cys91-Cys102. Residues Tyr43, Gly45, and Gly47 each contribute to the Ca(2+) site. The active site involves His63. Asp64 serves as a coordination point for Ca(2+). Residue Asp105 is part of the active site.

This sequence belongs to the phospholipase A2 family. Group II subfamily. D49 sub-subfamily. In terms of assembly, monomer. Homodimer; non-covalently linked (alternative/compact dimer conformation). Ca(2+) is required as a cofactor. As to expression, expressed by the venom gland.

It is found in the secreted. It carries out the reaction a 1,2-diacyl-sn-glycero-3-phosphocholine + H2O = a 1-acyl-sn-glycero-3-phosphocholine + a fatty acid + H(+). Its activity is regulated as follows. High level of membrane cholesterol content reduces cytolytic activity, whereas low level of membrane cholesterol content increases cytolytic activity. Its function is as follows. Snake venom phospholipase A2 (PLA2) that displays local myotoxic activity. It also displays anticoagulant action in plasma and edema-inducing activities. In addition, it shows cytotoxic activity to a variety of cell types and bactericidal activity to a variety of Gram-negative and Gram-positive bacteria. PLA2 catalyzes the calcium-dependent hydrolysis of the 2-acyl groups in 3-sn-phosphoglycerides. This is Basic phospholipase A2 myotoxin I from Bothrops asper (Terciopelo).